The sequence spans 224 residues: UPF0758 protein PSPTO_0086 (224 aa).

The MPN domain occupies 102 to 224 (ALENPAQVRN…PLSMVEKGLM (123 aa)). 3 residues coordinate Zn(2+): histidine 173, histidine 175, and aspartate 186. Residues 173-186 (HNHPSGITTPSRSD) carry the JAMM motif motif.

Belongs to the UPF0758 family.

This chain is UPF0758 protein PSPTO_0086, found in Pseudomonas syringae pv. tomato (strain ATCC BAA-871 / DC3000).